Consider the following 124-residue polypeptide: Small ribosomal subunit protein bS6 (124 aa).

Residues 96-124 (ETGPSPMMKEVQREEAKKSAATQPSEAQA) are disordered. Residues 115–124 (AATQPSEAQA) show a composition bias toward polar residues.

This sequence belongs to the bacterial ribosomal protein bS6 family.

Its function is as follows. Binds together with bS18 to 16S ribosomal RNA. The chain is Small ribosomal subunit protein bS6 from Paraburkholderia phytofirmans (strain DSM 17436 / LMG 22146 / PsJN) (Burkholderia phytofirmans).